Reading from the N-terminus, the 163-residue chain is Putative pre-16S rRNA nuclease (163 aa).

The protein belongs to the YqgF nuclease family.

It localises to the cytoplasm. Its function is as follows. Could be a nuclease involved in processing of the 5'-end of pre-16S rRNA. The chain is Putative pre-16S rRNA nuclease from Chlamydia caviae (strain ATCC VR-813 / DSM 19441 / 03DC25 / GPIC) (Chlamydophila caviae).